We begin with the raw amino-acid sequence, 954 residues long: Endogenous retrovirus group K member 25 Pol protein (954 aa).

A Reverse transcriptase domain is found at 57-245 (LEKGHIEPSF…TPFHYLGMQI (189 aa)). Residues 161-164 (LPQG) carry the LPQG motif. The short motif at 195-198 (YIDD) is the YXDD element. One can recognise an RNase H type-1 domain in the interval 460-588 (LENALTVFTD…ADLLVSSALI (129 aa)). The Mg(2+) site is built by aspartate 469, glutamate 497, aspartate 515, and aspartate 580. An Integrase-type zinc finger spans residues 585–626 (SALIKAQELHALTHVNAAGLKNKFDVTWKLAKDIVQHCTQCQ). Zn(2+)-binding residues include histidine 594, histidine 598, cysteine 622, and cysteine 625. Residues 640-801 (RGLCPNALWQ…TSAEQHLTGK (162 aa)) enclose the Integrase catalytic domain. The segment at residues 809–857 (KLIWWKDNKNKTWEIGKVITWGRGFACVSPGENQLPVWIPTRHLKFYNE) is a DNA-binding region (integrase-type). A disordered region spans residues 862-888 (AKKSTSAETETPQSSTVDSQDEQNGDV). Residues 867–879 (SAETETPQSSTVD) show a composition bias toward polar residues.

The protein belongs to the beta type-B retroviral polymerase family. HERV class-II K(HML-2) pol subfamily.

It catalyses the reaction DNA(n) + a 2'-deoxyribonucleoside 5'-triphosphate = DNA(n+1) + diphosphate. It carries out the reaction Endonucleolytic cleavage to 5'-phosphomonoester.. Its function is as follows. Early post-infection, the reverse transcriptase converts the viral RNA genome into double-stranded viral DNA. The RNase H domain of the reverse transcriptase performs two functions. It degrades the RNA template and specifically removes the RNA primer from the RNA/DNA hybrid. Following nuclear import, the integrase catalyzes the insertion of the linear, double-stranded viral DNA into the host cell chromosome. Endogenous Pol proteins may have kept, lost or modified their original function during evolution. The sequence is that of Endogenous retrovirus group K member 25 Pol protein (ERVK-25) from Homo sapiens (Human).